Here is a 265-residue protein sequence, read N- to C-terminus: Probable cyclic nucleotide phosphodiesterase SynWH7803_1390 (265 aa).

7 residues coordinate Fe cation: Asp-9, His-11, Asp-49, Asn-86, His-157, His-196, and His-198. AMP is bound by residues His-11, Asp-49, and 86 to 87 (NH). AMP is bound at residue His-198.

This sequence belongs to the cyclic nucleotide phosphodiesterase class-III family. It depends on Fe(2+) as a cofactor.

This Synechococcus sp. (strain WH7803) protein is Probable cyclic nucleotide phosphodiesterase SynWH7803_1390.